The primary structure comprises 1355 residues: MGSEAAAARPVVVTVNGERYEAVGVDPSTTLLEFLRTRTPVRGPKLGCGEGGCGACVVVVSKYDAVADEVTEFSASSCLTLLGSLHHCAVTTSEGIGNSRDGFHAVQRRLSGFHASQCGFCTPGMCMSIYSALAKADRCSSRPSPPPGFSKLTAAEAEKAVSGNLCRCTGYRPIVDACKSFAADVDLEDLGLNAFWKKGADDERADVGKLPAYSGGAAVCTFPEFLKSEIRSSMGQANGGAPAVAVTGDGWFHPKSVEEFHRLFDSNLFDERSVKIVASNTGSGVYKDQDLHDKYINISQILELSAINRSSKGVEIGAVVSISKAIEILSDGGAVFRKIADHLSKVASSFVQNTATIGGNIIMAQRLSFPSDIATVLLAAGSTVTIQVAAKRMCITLEEFLKQPPCDSRTLLVSISIPDWGSDDGITFESFRAAPRPLGNAVSYVNSAFLARSSVDGSSGSHLIEDVCLAFGAFGAEHAIRAREVEEFLKGKLVSAPVILEAVRLLKGVVSPAEGTTHPEYRVSLAVSYLFRFLTSLANGLDEPENANVPNGSCTNGTANGSANSSPEKHSNVDSSDLPIKSRQEMVFSDEYKPVGKPIEKTGAELQASGEAVYVDDIPAPKDCLYGAFIYSTHPHAHIKDINFRSSLASQKVITVITAKDIPTGGENIGSCFPMLGDEALFVHPVSEFAGQNIGVVIAETQKYAYMAAKQAVIEYSTENLQPPILTIEDAVQHNSYFPVPPFLAPTPIGDFNQAMSEADHKIIDGEVKLESQYYFYMETQTALAIPDEDNCITLYVSAQLPEITQNTVARCLGIPYHNVRIITRRVGGGFGGKAMKAIHVAAACAVAAFKLRRPVRMYLDRKTDMIMAGGRHPMKVKYSVGFKSDGKITGLHFDLGMNGGISPDCSPVLPVAIVGALKKYNWGALSFDIKVCKTNVSSKSAMRAPGDAQGSFIAEAIVEHIASTLSVDTNAIRRKNLHDFESLKVFYGNSAGDPSTYSLVTIFDKLASSPEYQQRAAMVEHFNAGNRWKKRGISCVPITYDVRLRPTPGKVSIMNDGSIAVEVGGVEIGQGLWTKVKQMTAFALGQLCDDGGEGLIDKVRVIQADTLSMIQGGFTGGSTTSETSCEAVRKSCAALVERLKPIKEKAGTPPWKSLIAQASMASVKLTEHAYWTPDPTFTSYLNYGAAISEVEVDVLTGETTILRSDLVYDCGQSLNPAVDLGQVEGAFVQGIGFFTNEEYTTNSDGLVINDGTWTYKIPTVDTIPKQFNVELINSARDHKRVLSSKASGEPPLLLASSVHCAMREAIRAARKEFAGAGGSPLTFQMDVPATMPIVKELCGLDVVERYLESFAAKA.

Residues 9-96 (RPVVVTVNGE…HCAVTTSEGI (88 aa)) enclose the 2Fe-2S ferredoxin-type domain. [2Fe-2S] cluster contacts are provided by Cys-48, Cys-53, Cys-56, and Cys-78. The 179-residue stretch at 244–422 (VAVTGDGWFH…VSISIPDWGS (179 aa)) folds into the FAD-binding PCMH-type domain. A disordered region spans residues 544 to 577 (PENANVPNGSCTNGTANGSANSSPEKHSNVDSSD). The span at 548-566 (NVPNGSCTNGTANGSANSS) shows a compositional bias: polar residues.

It belongs to the xanthine dehydrogenase family. As to quaternary structure, aldehyde oxidases (AO) are homodimers and heterodimers of AO subunits. Requires [2Fe-2S] cluster as cofactor. FAD serves as cofactor. Mo-molybdopterin is required as a cofactor.

The catalysed reaction is an aldehyde + O2 + H2O = a carboxylate + H2O2 + H(+). The chain is Probable aldehyde oxidase 2 from Oryza sativa subsp. japonica (Rice).